Consider the following 429-residue polypeptide: Glutamate-1-semialdehyde 2,1-aminomutase 2 (429 aa).

Lysine 268 bears the N6-(pyridoxal phosphate)lysine mark.

It belongs to the class-III pyridoxal-phosphate-dependent aminotransferase family. HemL subfamily. In terms of assembly, homodimer. Pyridoxal 5'-phosphate serves as cofactor.

It is found in the cytoplasm. It carries out the reaction (S)-4-amino-5-oxopentanoate = 5-aminolevulinate. It functions in the pathway porphyrin-containing compound metabolism; protoporphyrin-IX biosynthesis; 5-aminolevulinate from L-glutamyl-tRNA(Glu): step 2/2. This is Glutamate-1-semialdehyde 2,1-aminomutase 2 from Staphylococcus aureus (strain MSSA476).